The chain runs to 234 residues: Uridylate kinase (234 aa).

9 to 12 lines the ATP pocket; sequence KLSG. Glycine 51 serves as a coordination point for UMP. ATP contacts are provided by glycine 52 and arginine 56. UMP-binding positions include aspartate 71 and 132 to 139; that span reads CGNPFFTT. Residues threonine 159, tyrosine 165, and aspartate 168 each contribute to the ATP site.

It belongs to the UMP kinase family. In terms of assembly, homohexamer.

It localises to the cytoplasm. The catalysed reaction is UMP + ATP = UDP + ADP. It participates in pyrimidine metabolism; CTP biosynthesis via de novo pathway; UDP from UMP (UMPK route): step 1/1. With respect to regulation, inhibited by UTP. Its function is as follows. Catalyzes the reversible phosphorylation of UMP to UDP. In Prochlorococcus marinus (strain MIT 9515), this protein is Uridylate kinase.